Consider the following 271-residue polypeptide: Formamidopyrimidine-DNA glycosylase (271 aa).

Pro2 (schiff-base intermediate with DNA) is an active-site residue. Glu3 functions as the Proton donor in the catalytic mechanism. The Proton donor; for beta-elimination activity role is filled by Lys58. Residues His91, Arg110, and Arg152 each coordinate DNA. The segment at 237-271 adopts an FPG-type zinc-finger fold; that stretch reads RVYDRAGQPCRVCGEPIRCVRLGQRATYYCPRCQR. Arg261 functions as the Proton donor; for delta-elimination activity in the catalytic mechanism.

It belongs to the FPG family. In terms of assembly, monomer. The cofactor is Zn(2+).

It carries out the reaction Hydrolysis of DNA containing ring-opened 7-methylguanine residues, releasing 2,6-diamino-4-hydroxy-5-(N-methyl)formamidopyrimidine.. It catalyses the reaction 2'-deoxyribonucleotide-(2'-deoxyribose 5'-phosphate)-2'-deoxyribonucleotide-DNA = a 3'-end 2'-deoxyribonucleotide-(2,3-dehydro-2,3-deoxyribose 5'-phosphate)-DNA + a 5'-end 5'-phospho-2'-deoxyribonucleoside-DNA + H(+). Involved in base excision repair of DNA damaged by oxidation or by mutagenic agents. Acts as a DNA glycosylase that recognizes and removes damaged bases. Has a preference for oxidized purines, such as 7,8-dihydro-8-oxoguanine (8-oxoG). Has AP (apurinic/apyrimidinic) lyase activity and introduces nicks in the DNA strand. Cleaves the DNA backbone by beta-delta elimination to generate a single-strand break at the site of the removed base with both 3'- and 5'-phosphates. The chain is Formamidopyrimidine-DNA glycosylase from Methylococcus capsulatus (strain ATCC 33009 / NCIMB 11132 / Bath).